We begin with the raw amino-acid sequence, 432 residues long: MSIITDIYAREVLDSRGNPTIEVEVYTESGAFGRGMVPSGASTGEYEAVELRDGDKARYLGKGVTKAVDNVNNIIAEAIIGYDVRDQMAIDKAMIDLDGTPNKGKLGANAILGVSIAVARAAADYLEVPLYHYLGGFNTKVLPTPMMNIINGGSHADNSIDFQEFMIMPVGAPTFKEALRMGAEVFHALASILKGRGLATSVGDEGGFAPNLGSNEEGFEVIIEAIEKAGYVPGKDVVLAMDAASSEFYDKEKGVYVLADSGEGEKTTEEMIAFYEELVSKYPIISIEDGLDENDWDGFKKLTEVLGDKVQLVGDDLFVTNTTKLAEGIEKGIANSILIKVNQIGTLTETFEAIEMAKEAGYTAVVSHRSGETEDSTISDIAVATNAGQIKTGSLSRTDRIAKYNQLLRIEDQLGDVAEYKGLKSFYNLKNK.

Gln-163 provides a ligand contact to (2R)-2-phosphoglycerate. Glu-205 (proton donor) is an active-site residue. Residues Asp-242, Glu-288, and Asp-315 each coordinate Mg(2+). Residues Lys-340, Arg-369, Ser-370, and Lys-391 each coordinate (2R)-2-phosphoglycerate. The active-site Proton acceptor is Lys-340.

The protein belongs to the enolase family. It depends on Mg(2+) as a cofactor.

The protein resides in the cytoplasm. The protein localises to the secreted. It localises to the cell surface. The enzyme catalyses (2R)-2-phosphoglycerate = phosphoenolpyruvate + H2O. It functions in the pathway carbohydrate degradation; glycolysis; pyruvate from D-glyceraldehyde 3-phosphate: step 4/5. Catalyzes the reversible conversion of 2-phosphoglycerate (2-PG) into phosphoenolpyruvate (PEP). It is essential for the degradation of carbohydrates via glycolysis. The chain is Enolase from Enterococcus faecalis (strain ATCC 700802 / V583).